The chain runs to 388 residues: MKIHEYQGKEILRKFGVAVPRGKPAFSVDEAVKVAEELGGPVWVVKAQIHAGGRGKGGGVKVAKSIEQVREYANQILGMQLVTHQTGPEGQKVNRLMVEEGADIKQELYVSLVVDRVTQKIVLMGSSEGGMDIEEVAEKHPELIHKVIVEPSTGLLDAQADDLAAKIGVPAASIPQARAILQGLYKAFWETDASLAEINPLNVSSDGKVIALDAKFNFDSNALFRHPEIVAYRDLDEEDPAEIEASKFDLAYISLDGNIGCLVNGAGLAMATMDTIKLFGGEPANFLDVGGGATTEKVTEAFKLMLKNPDLKAILVNIFGGIMRCDVIAEGVIAGSKAVNLNVPLVVRMKGTNEDLGKKMLADSGLPIISADSMEEAAQKVVAAAAGK.

Positions 9–244 constitute an ATP-grasp domain; sequence KEILRKFGVA…LDEEDPAEIE (236 aa). Residues lysine 46, 53-55, glutamate 99, alanine 102, and glutamate 107 each bind ATP; that span reads GRG. Mg(2+) is bound by residues asparagine 199 and aspartate 213. Substrate-binding positions include asparagine 264 and 321-323; that span reads GIM.

This sequence belongs to the succinate/malate CoA ligase beta subunit family. In terms of assembly, heterotetramer of two alpha and two beta subunits. Mg(2+) serves as cofactor.

The enzyme catalyses succinate + ATP + CoA = succinyl-CoA + ADP + phosphate. The catalysed reaction is GTP + succinate + CoA = succinyl-CoA + GDP + phosphate. The protein operates within carbohydrate metabolism; tricarboxylic acid cycle; succinate from succinyl-CoA (ligase route): step 1/1. Functionally, succinyl-CoA synthetase functions in the citric acid cycle (TCA), coupling the hydrolysis of succinyl-CoA to the synthesis of either ATP or GTP and thus represents the only step of substrate-level phosphorylation in the TCA. The beta subunit provides nucleotide specificity of the enzyme and binds the substrate succinate, while the binding sites for coenzyme A and phosphate are found in the alpha subunit. This Burkholderia lata (strain ATCC 17760 / DSM 23089 / LMG 22485 / NCIMB 9086 / R18194 / 383) protein is Succinate--CoA ligase [ADP-forming] subunit beta.